We begin with the raw amino-acid sequence, 119 residues long: Protein TusC (119 aa).

This sequence belongs to the DsrF/TusC family. As to quaternary structure, heterohexamer, formed by a dimer of trimers. The hexameric TusBCD complex contains 2 copies each of TusB, TusC and TusD. The TusBCD complex interacts with TusE.

It localises to the cytoplasm. In terms of biological role, part of a sulfur-relay system required for 2-thiolation of 5-methylaminomethyl-2-thiouridine (mnm(5)s(2)U) at tRNA wobble positions. In Shigella dysenteriae serotype 1 (strain Sd197), this protein is Protein TusC.